The primary structure comprises 220 residues: Ribosomal RNA large subunit methyltransferase E (220 aa).

S-adenosyl-L-methionine-binding residues include Gly60, Trp62, Asp92, Asp108, and Asp133. The active-site Proton acceptor is Lys173. Residues 197–220 (RKPKASRDKSSETFILGRQLKQPR) are disordered.

It belongs to the class I-like SAM-binding methyltransferase superfamily. RNA methyltransferase RlmE family.

Its subcellular location is the cytoplasm. It carries out the reaction uridine(2552) in 23S rRNA + S-adenosyl-L-methionine = 2'-O-methyluridine(2552) in 23S rRNA + S-adenosyl-L-homocysteine + H(+). Its function is as follows. Specifically methylates the uridine in position 2552 of 23S rRNA at the 2'-O position of the ribose in the fully assembled 50S ribosomal subunit. The protein is Ribosomal RNA large subunit methyltransferase E of Burkholderia ambifaria (strain ATCC BAA-244 / DSM 16087 / CCUG 44356 / LMG 19182 / AMMD) (Burkholderia cepacia (strain AMMD)).